The chain runs to 414 residues: Ornithine aminotransferase (414 aa).

An intrachain disulfide couples Cys154 to Cys163. Lys262 carries the N6-(pyridoxal phosphate)lysine modification.

It belongs to the class-III pyridoxal-phosphate-dependent aminotransferase family. In terms of assembly, homodimer. The cofactor is pyridoxal 5'-phosphate. The disulfide bond between Cys-154 and Cys-163 is reduced by TRX1 which increases OAT catalytic activity.

Its subcellular location is the cytoplasm. The enzyme catalyses a 2-oxocarboxylate + L-ornithine = L-glutamate 5-semialdehyde + an L-alpha-amino acid. The catalysed reaction is L-ornithine + 2-oxoglutarate = L-glutamate 5-semialdehyde + L-glutamate. It functions in the pathway amino-acid biosynthesis; L-proline biosynthesis; L-glutamate 5-semialdehyde from L-ornithine: step 1/1. Its activity is regulated as follows. Unlike for mammalian OATs, activity is increased by TRX1-mediated reduction of the disulfide bond between Cys-154 and Cys-163. Binding to TRX1 may also induce conformational changes that facilitate substrate binding. In terms of biological role, catalyzes the transamination of alpha-ketoglutarate with ornithine or N-acetylornithine and of glutamate-5-semialdehyde with glutamate and alanine. This is Ornithine aminotransferase from Plasmodium chabaudi chabaudi.